Here is a 377-residue protein sequence, read N- to C-terminus: D-alanine--D-alanine ligase (377 aa).

The ATP-grasp domain occupies 137-346; sequence KELMTVNGIR…RSQQAEKLIQ (210 aa). Residue 167–222 participates in ATP binding; that stretch reads SKQLGEVVFVKAANQGSSVGVSRVTNAEEYENALRDSFQYDEKLLVEKAVESPTEL. Aspartate 300, glutamate 313, and asparagine 315 together coordinate Mg(2+).

This sequence belongs to the D-alanine--D-alanine ligase family. Mg(2+) serves as cofactor. Requires Mn(2+) as cofactor.

It localises to the cytoplasm. The catalysed reaction is 2 D-alanine + ATP = D-alanyl-D-alanine + ADP + phosphate + H(+). The protein operates within cell wall biogenesis; peptidoglycan biosynthesis. Cell wall formation. This chain is D-alanine--D-alanine ligase, found in Oenococcus oeni (strain ATCC BAA-331 / PSU-1).